The primary structure comprises 302 residues: Lipooligosaccharide biosynthesis protein lex-1 (302 aa).

Tandem repeats lie at residues 42-45 (SINQ), 46-49 (SINQ), 50-53 (SINQ), 54-57 (SINQ), 58-61 (SINQ), 62-65 (SINQ), and 66-69 (SINQ). The interval 42–69 (SINQSINQSINQSINQSINQSINQSINQ) is 7 X 4 AA tandem repeats of S-I-N-Q.

This sequence belongs to the glycosyltransferase 25 family.

Involved in extracellular lipooligosaccharide (LOS) biosynthesis and virulence expression. Involved in the synthesis of the oligosaccharide moiety of the LOS molecule by adding GalNAc. This is Lipooligosaccharide biosynthesis protein lex-1 (lex1) from Haemophilus influenzae (strain ATCC 51907 / DSM 11121 / KW20 / Rd).